A 717-amino-acid chain; its full sequence is F-box only protein 42 (717 aa).

Residues 1 to 30 (MASSSDSEDDSFMAVDQEETVLEGTMDQDE) show a composition bias toward acidic residues. The interval 1-34 (MASSSDSEDDSFMAVDQEETVLEGTMDQDEEPHP) is disordered. The region spanning 44 to 93 (NRSMSELPEEVLEYILSFLSPYQEHKTAALVCKQWYRLIKGVAHQCYHGF) is the F-box domain. Kelch repeat units follow at residues 132 to 184 (SMYV…VYKD), 186 to 242 (LVLF…VIDD), 244 to 293 (MIVF…VIDD), and 295 to 342 (TILI…LWCH). Positions 361–474 (RAPLSPSLNS…PSTPSAPEGY (114 aa)) are disordered. Over residues 363 to 376 (PLSPSLNSRPSPIS) the composition is skewed to low complexity. A phosphoserine mark is found at Ser365 and Ser373. Thr378 carries the phosphothreonine modification. Polar residues-rich tracts occupy residues 416–426 (QRQTPSGSREG) and 455–469 (SLDS…STPS). Residue Ser552 is modified to Phosphoserine. Residues 570 to 596 (GPSASAALSPPLGSSPGSPGSQSLSSG) are compositionally biased toward low complexity. The disordered stretch occupies residues 570 to 631 (GPSASAALSP…GHHPPQSLNV (62 aa)).

In terms of assembly, component of some SCF complex, composed of CUL1, SKP1, RBX1 and FBXO42. Interacts (via the kelch domain) with p53/TP53; interaction is direct.

In terms of biological role, substrate-recognition component of some SCF (SKP1-CUL1-F-box protein)-type E3 ubiquitin ligase complex. Specifically recognizes p53/TP53, promoting its ubiquitination and degradation. In Homo sapiens (Human), this protein is F-box only protein 42 (FBXO42).